A 283-amino-acid polypeptide reads, in one-letter code: Lipoyl synthase (283 aa).

7 residues coordinate [4Fe-4S] cluster: cysteine 35, cysteine 40, cysteine 46, cysteine 61, cysteine 65, cysteine 68, and serine 273. Positions phenylalanine 47–alanine 262 constitute a Radical SAM core domain.

It belongs to the radical SAM superfamily. Lipoyl synthase family. The cofactor is [4Fe-4S] cluster.

It localises to the cytoplasm. It catalyses the reaction [[Fe-S] cluster scaffold protein carrying a second [4Fe-4S](2+) cluster] + N(6)-octanoyl-L-lysyl-[protein] + 2 oxidized [2Fe-2S]-[ferredoxin] + 2 S-adenosyl-L-methionine + 4 H(+) = [[Fe-S] cluster scaffold protein] + N(6)-[(R)-dihydrolipoyl]-L-lysyl-[protein] + 4 Fe(3+) + 2 hydrogen sulfide + 2 5'-deoxyadenosine + 2 L-methionine + 2 reduced [2Fe-2S]-[ferredoxin]. The protein operates within protein modification; protein lipoylation via endogenous pathway; protein N(6)-(lipoyl)lysine from octanoyl-[acyl-carrier-protein]: step 2/2. In terms of biological role, catalyzes the radical-mediated insertion of two sulfur atoms into the C-6 and C-8 positions of the octanoyl moiety bound to the lipoyl domains of lipoate-dependent enzymes, thereby converting the octanoylated domains into lipoylated derivatives. This Geobacter metallireducens (strain ATCC 53774 / DSM 7210 / GS-15) protein is Lipoyl synthase.